Here is a 351-residue protein sequence, read N- to C-terminus: Protein RecA (351 aa).

64 to 71 (GPESSGKT) contacts ATP. The disordered stretch occupies residues 330-351 (DRFLQNGGPDPDDGDGDATAEM). The span at 339–351 (DPDDGDGDATAEM) shows a compositional bias: acidic residues.

This sequence belongs to the RecA family.

It is found in the cytoplasm. Can catalyze the hydrolysis of ATP in the presence of single-stranded DNA, the ATP-dependent uptake of single-stranded DNA by duplex DNA, and the ATP-dependent hybridization of homologous single-stranded DNAs. It interacts with LexA causing its activation and leading to its autocatalytic cleavage. The polypeptide is Protein RecA (Rhizobium leguminosarum bv. viciae).